A 245-amino-acid chain; its full sequence is Polyhedrin (245 aa).

The protein belongs to the polyhedrin family.

In terms of biological role, major component of the virus occlusion bodies, which are large proteinaceous structures (polyhedra), that protect the virus from the outside environment for extended periods until they are ingested by insect larvae. The polypeptide is Polyhedrin (PH) (Lepidoptera (butterflies and moths)).